A 741-amino-acid chain; its full sequence is Zinc finger and BTB domain-containing protein 20 (741 aa).

The span at 1–17 (MLERKKPKTAENQKASE) shows a compositional bias: basic and acidic residues. Residues 1–32 (MLERKKPKTAENQKASEENEITQPGGSSAKPG) are disordered. In terms of domain architecture, BTB spans 104–167 (CDVTVRIHGS…MYSGVLRVSQ (64 aa)). The interval 203-235 (GIQDSGQDTPRGTPESGTSGQSSDTESGYLQSH) is disordered. A compositionally biased stretch (polar residues) spans 206–235 (DSGQDTPRGTPESGTSGQSSDTESGYLQSH). At Thr211 the chain carries Phosphothreonine. Lys330 participates in a covalent cross-link: Glycyl lysine isopeptide (Lys-Gly) (interchain with G-Cter in SUMO1); alternate. Residue Lys330 forms a Glycyl lysine isopeptide (Lys-Gly) (interchain with G-Cter in SUMO2); alternate linkage. Residues 350-440 (RNESEECTED…SSPERSNEVE (91 aa)) are disordered. Ser353 is subject to Phosphoserine. Positions 354–367 (EECTEDTDQAEGTE) are enriched in acidic residues. Position 357 is a phosphothreonine (Thr357). A Glycyl lysine isopeptide (Lys-Gly) (interchain with G-Cter in SUMO2) cross-link involves residue Lys371. The span at 404 to 423 (AEPTQPEQAAEAPAEGGPQT) shows a compositional bias: low complexity. Residues 424 to 434 (NQLETGASSPE) are compositionally biased toward polar residues. 4 C2H2-type zinc fingers span residues 578–600 (YECT…MFVH), 606–628 (HQCS…MVTH), 634–656 (YQCS…MRLH), and 662–684 (YECY…VALH). Residues Thr690 and Thr695 each carry the phosphothreonine modification. The C2H2-type 5 zinc-finger motif lies at 715–737 (YVCSVCPAKFDQIEQFNDHMRMH). Residue Lys723 forms a Glycyl lysine isopeptide (Lys-Gly) (interchain with G-Cter in SUMO2) linkage.

As to quaternary structure, can homodimerize. Binds to DNA. Post-translationally, sumoylated with SUMO1. In terms of tissue distribution, expressed in spleen, lymph node, thymus, peripheral blood leukocytes, and fetal liver.

The protein resides in the nucleus. In terms of biological role, may be a transcription factor that may be involved in hematopoiesis, oncogenesis, and immune responses. Plays a role in postnatal myogenesis, may be involved in the regulation of satellite cells self-renewal. The protein is Zinc finger and BTB domain-containing protein 20 (ZBTB20) of Homo sapiens (Human).